A 406-amino-acid polypeptide reads, in one-letter code: Pyruvate dehydrogenase E1 component subunit beta-2, chloroplastic (406 aa).

Residues 1–44 constitute a chloroplast transit peptide; it reads MSSIIHGAGAATTTLSTFNSVDSKKLFVAPSRTNLSVRSQRYIV. Glutamate 142 is a binding site for thiamine diphosphate. K(+) contacts are provided by valine 195, alanine 243, isoleucine 244, and asparagine 248.

As to quaternary structure, tetramer of 2 alpha and 2 beta subunits. The cofactor is thiamine diphosphate.

Its subcellular location is the plastid. It localises to the chloroplast. It carries out the reaction N(6)-[(R)-lipoyl]-L-lysyl-[protein] + pyruvate + H(+) = N(6)-[(R)-S(8)-acetyldihydrolipoyl]-L-lysyl-[protein] + CO2. Its function is as follows. The pyruvate dehydrogenase complex catalyzes the overall conversion of pyruvate to acetyl-CoA and CO(2). It contains multiple copies of three enzymatic components: pyruvate dehydrogenase (E1), dihydrolipoamide acetyltransferase (E2) and lipoamide dehydrogenase (E3). This chain is Pyruvate dehydrogenase E1 component subunit beta-2, chloroplastic (PDH-E1 BETA), found in Arabidopsis thaliana (Mouse-ear cress).